The following is a 368-amino-acid chain: Histidinol-phosphate aminotransferase (368 aa).

K229 carries the post-translational modification N6-(pyridoxal phosphate)lysine.

It belongs to the class-II pyridoxal-phosphate-dependent aminotransferase family. Histidinol-phosphate aminotransferase subfamily. Homodimer. It depends on pyridoxal 5'-phosphate as a cofactor.

The enzyme catalyses L-histidinol phosphate + 2-oxoglutarate = 3-(imidazol-4-yl)-2-oxopropyl phosphate + L-glutamate. Its pathway is amino-acid biosynthesis; L-histidine biosynthesis; L-histidine from 5-phospho-alpha-D-ribose 1-diphosphate: step 7/9. This chain is Histidinol-phosphate aminotransferase, found in Acidovorax ebreus (strain TPSY) (Diaphorobacter sp. (strain TPSY)).